We begin with the raw amino-acid sequence, 346 residues long: NADH-quinone oxidoreductase subunit H 2 (346 aa).

Helical transmembrane passes span 14 to 34 (IAMV…VAYA), 83 to 103 (FAFL…FAVI), 136 to 156 (VGVL…VLAG), 172 to 192 (SAQM…VFML), 208 to 228 (GAWY…CSIA), 260 to 280 (FFMA…TLFL), 289 to 309 (LPGW…CMWI), and 324 to 344 (LGWK…GIIV).

The protein belongs to the complex I subunit 1 family. As to quaternary structure, NDH-1 is composed of 14 different subunits. Subunits NuoA, H, J, K, L, M, N constitute the membrane sector of the complex.

It localises to the cell inner membrane. The catalysed reaction is a quinone + NADH + 5 H(+)(in) = a quinol + NAD(+) + 4 H(+)(out). NDH-1 shuttles electrons from NADH, via FMN and iron-sulfur (Fe-S) centers, to quinones in the respiratory chain. The immediate electron acceptor for the enzyme in this species is believed to be ubiquinone. Couples the redox reaction to proton translocation (for every two electrons transferred, four hydrogen ions are translocated across the cytoplasmic membrane), and thus conserves the redox energy in a proton gradient. This subunit may bind ubiquinone. The chain is NADH-quinone oxidoreductase subunit H 2 from Geobacter metallireducens (strain ATCC 53774 / DSM 7210 / GS-15).